We begin with the raw amino-acid sequence, 178 residues long: Large ribosomal subunit protein bL17 (178 aa).

The tract at residues 150–178 (PADEPVVAEENAPQSAVKDAVDECEGKAD) is disordered. A compositionally biased stretch (basic and acidic residues) spans 168–178 (DAVDECEGKAD).

Belongs to the bacterial ribosomal protein bL17 family. Part of the 50S ribosomal subunit. Contacts protein L32.

The sequence is that of Large ribosomal subunit protein bL17 from Geobacter metallireducens (strain ATCC 53774 / DSM 7210 / GS-15).